Consider the following 333-residue polypeptide: Foldase protein PrsA (333 aa).

Positions 1 to 21 are cleaved as a signal peptide; that stretch reads MKKRTIATGLVTLLSIVTLAA. Residue C22 is the site of N-palmitoyl cysteine attachment. Residue C22 is the site of S-diacylglycerol cysteine attachment. In terms of domain architecture, PpiC spans 144–237; it reads KPEVTAQVIQ…PVYYIVKITK (94 aa). The tract at residues 296–333 is disordered; it reads AASGSGSSGSTTTTTAASSAATTAADDQTTAAETTAAE.

It belongs to the PrsA family.

It localises to the cell membrane. The catalysed reaction is [protein]-peptidylproline (omega=180) = [protein]-peptidylproline (omega=0). In terms of biological role, plays a major role in protein secretion by helping the post-translocational extracellular folding of several secreted proteins. The chain is Foldase protein PrsA from Streptococcus mutans serotype c (strain ATCC 700610 / UA159).